Consider the following 344-residue polypeptide: N-acetyl-gamma-glutamyl-phosphate reductase (344 aa).

Residue C150 is part of the active site.

It belongs to the NAGSA dehydrogenase family. Type 1 subfamily.

It is found in the cytoplasm. The enzyme catalyses N-acetyl-L-glutamate 5-semialdehyde + phosphate + NADP(+) = N-acetyl-L-glutamyl 5-phosphate + NADPH + H(+). It functions in the pathway amino-acid biosynthesis; L-arginine biosynthesis; N(2)-acetyl-L-ornithine from L-glutamate: step 3/4. In terms of biological role, catalyzes the NADPH-dependent reduction of N-acetyl-5-glutamyl phosphate to yield N-acetyl-L-glutamate 5-semialdehyde. This is N-acetyl-gamma-glutamyl-phosphate reductase from Pseudomonas putida (strain W619).